Consider the following 217-residue polypeptide: Phosphatase MT3486 (217 aa).

Catalysis depends on aspartate 9, which acts as the Nucleophile.

This sequence belongs to the HAD-like hydrolase superfamily.

In terms of biological role, able to hydrolyze geranyl diphosphate (GPP), farnesyl diphosphate (FPP) and geranylgeranyl diphosphate (GGPP) to respectively yield geraniol, farnesol and geranylgeraniol. The polypeptide is Phosphatase MT3486 (Mycobacterium tuberculosis (strain CDC 1551 / Oshkosh)).